Reading from the N-terminus, the 95-residue chain is Large ribosomal subunit protein bL27 (95 aa).

Positions 1–10 are excised as a propeptide; it reads MRFILNLQFF.

The protein belongs to the bacterial ribosomal protein bL27 family. The N-terminus is cleaved by ribosomal processing cysteine protease Prp.

This Mesoplasma florum (strain ATCC 33453 / NBRC 100688 / NCTC 11704 / L1) (Acholeplasma florum) protein is Large ribosomal subunit protein bL27.